The following is a 1226-amino-acid chain: Chitin synthase IV (1226 aa).

Residues 1-205 are disordered; that stretch reads MSLPERPGGS…SRKNPATAEQ (205 aa). Residues 49 to 65 are compositionally biased toward polar residues; that stretch reads SVSSYAETISNPHANTE. Positions 66 to 75 are enriched in low complexity; the sequence is TLPLSPTHPT. Positions 94–107 are enriched in basic and acidic residues; the sequence is IRPERNRIDKDHRN. Over residues 134–151 the composition is skewed to polar residues; that stretch reads DVSTEPSGGSQTHGSFAD. The span at 163 to 172 shows a compositional bias: basic and acidic residues; sequence MSGDDQEKGN. A compositionally biased stretch (basic residues) spans 173 to 198; that stretch reads TRVKSRPRRSKSGKITKETRHRKSRK. A helical membrane pass occupies residues 246-266; the sequence is MGLISIILVIMAIVGFLTFGF. 3 N-linked (GlcNAc...) asparagine glycosylation sites follow: Asn381, Asn421, and Asn443. A helical membrane pass occupies residues 516-536; the sequence is ILILSVVGTRFVLALIFQWFI. The disordered stretch occupies residues 572–671; it reads LPGDVGSSAM…PGPAGFIHDS (100 aa). Polar residues-rich tracts occupy residues 580–601 and 618–643; these read AMGSSDRTSKRGSSFLPTTSRF and TTMSSQGPASALLNPNSIYRQGNDSR. A glycan (N-linked (GlcNAc...) asparagine) is linked at Asn640. Over residues 649–666 the composition is skewed to low complexity; that stretch reads PDPYSSAASPSDGPGPAG. 2 N-linked (GlcNAc...) asparagine glycosylation sites follow: Asn787 and Asn1035. 3 consecutive transmembrane segments (helical) span residues 1060–1080, 1094–1114, and 1118–1138; these read FVVFVELVGTLVLPAAIAFTF, IIPLVLLALILGLPGLLILVT, and WSYVVWMLIYLVSLPIWNFVL.

It belongs to the chitin synthase family. Class IV subfamily. In terms of tissue distribution, highly expressed in conidia.

Its subcellular location is the cell membrane. The enzyme catalyses [(1-&gt;4)-N-acetyl-beta-D-glucosaminyl](n) + UDP-N-acetyl-alpha-D-glucosamine = [(1-&gt;4)-N-acetyl-beta-D-glucosaminyl](n+1) + UDP + H(+). Polymerizes chitin, a structural polymer of the cell wall and septum, by transferring the sugar moiety of UDP-GlcNAc to the non-reducing end of the growing chitin polymer. Contributes to the production of conidia and the ability of fungal conidia to germinate. Involved in fungal stress tolerances. This is Chitin synthase IV from Metarhizium acridum (strain CQMa 102).